A 398-amino-acid polypeptide reads, in one-letter code: DNA-directed RNA polymerase III subunit RPC4 (398 aa).

Residues methionine 1 to glutamate 149 are disordered. Serine 2 bears the N-acetylserine mark. Serine 42 carries the phosphoserine modification. 3 stretches are compositionally biased toward basic and acidic residues: residues lysine 66 to proline 100, methionine 116 to aspartate 128, and isoleucine 140 to glutamate 149. Glycyl lysine isopeptide (Lys-Gly) (interchain with G-Cter in SUMO2) cross-links involve residues lysine 68 and lysine 78. Residues arginine 95, arginine 97, and arginine 99 each carry the omega-N-methylarginine modification. Glycyl lysine isopeptide (Lys-Gly) (interchain with G-Cter in SUMO2) cross-links involve residues lysine 141, lysine 152, lysine 160, lysine 190, lysine 199, lysine 206, lysine 220, lysine 285, lysine 302, and lysine 396. The tract at residues glutamate 191 to glycine 244 is disordered.

This sequence belongs to the eukaryotic RPC4/POLR3D RNA polymerase subunit family. In terms of assembly, component of the RNA polymerase III complex consisting of 17 subunits: a ten-subunit horseshoe-shaped catalytic core composed of POLR3A/RPC1, POLR3B/RPC2, POLR1C/RPAC1, POLR1D/RPAC2, POLR3K/RPC10, POLR2E/RPABC1, POLR2F/RPABC2, POLR2H/RPABC3, POLR2K/RPABC4 and POLR2L/RPABC5; a mobile stalk composed of two subunits POLR3H/RPC8 and CRCP/RPC9, protruding from the core and functioning primarily in transcription initiation; and additional subunits homologous to general transcription factors of the RNA polymerase II machinery, POLR3C/RPC3-POLR3F/RPC6-POLR3G/RPC7 heterotrimer required for transcription initiation and POLR3D/RPC4-POLR3E/RPC5 heterodimer involved in both transcription initiation and termination. Post-translationally, sumoylation on Lys-141 can serve as a signal to mark misfolded Pol III for proteasomal degradation.

It localises to the nucleus. In terms of biological role, DNA-dependent RNA polymerase catalyzes the transcription of DNA into RNA using the four ribonucleoside triphosphates as substrates. Specific peripheric component of RNA polymerase III (Pol III) which synthesizes small non-coding RNAs including 5S rRNA, snRNAs, tRNAs and miRNAs from at least 500 distinct genomic loci. Enables recruitment of Pol III at transcription initiation site and drives transcription initiation from both type 2 and type 3 DNA promoters. Required for efficient transcription termination and reinitiation. Pol III plays a key role in sensing and limiting infection by intracellular bacteria and DNA viruses. Acts as nuclear and cytosolic DNA sensor involved in innate immune response. Can sense non-self dsDNA that serves as template for transcription into dsRNA. The non-self RNA polymerase III transcripts, such as Epstein-Barr virus-encoded RNAs (EBERs) induce type I interferon and NF-kappa-B through the RIG-I pathway. This Mus musculus (Mouse) protein is DNA-directed RNA polymerase III subunit RPC4.